Here is a 104-residue protein sequence, read N- to C-terminus: uncharacterized protein (104 aa).

This is an uncharacterized protein from Archaeoglobus fulgidus (strain ATCC 49558 / DSM 4304 / JCM 9628 / NBRC 100126 / VC-16).